The primary structure comprises 947 residues: DNA polymerase (947 aa).

It belongs to the DNA polymerase type-B family.

The catalysed reaction is DNA(n) + a 2'-deoxyribonucleoside 5'-triphosphate = DNA(n+1) + diphosphate. This Red sea bream iridovirus (RSIV) protein is DNA polymerase.